The primary structure comprises 407 residues: Peptidase T (407 aa).

H81 serves as a coordination point for Zn(2+). D83 is an active-site residue. Residue D142 coordinates Zn(2+). The active-site Proton acceptor is the E176. Zn(2+)-binding residues include E177, D199, and H381.

This sequence belongs to the peptidase M20B family. Requires Zn(2+) as cofactor.

It is found in the cytoplasm. The catalysed reaction is Release of the N-terminal residue from a tripeptide.. Its function is as follows. Cleaves the N-terminal amino acid of tripeptides. This is Peptidase T from Streptococcus pneumoniae (strain Hungary19A-6).